Here is a 315-residue protein sequence, read N- to C-terminus: Fe(3+)-citrate-binding protein YfmC (315 aa).

Positions 1 to 18 (MRTYSNKLIAIMSVLLLA) are cleaved as a signal peptide. Residue Cys-19 is the site of N-palmitoyl cysteine attachment. Cys-19 is lipidated: S-diacylglycerol cysteine. The segment covering 27-36 (SSQNNNGSGK) has biased composition (low complexity). Residues 27-52 (SSQNNNGSGKSESKDSRVIHDEEGKT) form a disordered region. The segment covering 37–51 (SESKDSRVIHDEEGK) has biased composition (basic and acidic residues). Residues 60 to 315 (RVVVLELSFL…KDVLKKVYNK (256 aa)) form the Fe/B12 periplasmic-binding domain.

The protein belongs to the bacterial solute-binding protein 8 family. As to quaternary structure, the complex is composed of one ATP-binding protein (YfmF), two transmembrane proteins (YfmD and YfmE) and a solute-binding protein (YfmC).

It localises to the cell membrane. In terms of biological role, part of the ABC transporter complex YfmCDEF involved in citrate-dependent Fe(3+) import. Binds citrate-dependent Fe(3+) and delivers it to the surface of YfmDE. The polypeptide is Fe(3+)-citrate-binding protein YfmC (yfmC) (Bacillus subtilis (strain 168)).